Here is a 322-residue protein sequence, read N- to C-terminus: NADH-cytochrome b5 reductase 2 (322 aa).

The chain crosses the membrane as a helical span at residues 30–46; that stretch reads LAPVYVAVGLAGLGVGL. Residues 71–176 form the FAD-binding FR-type domain; that stretch reads QGWVNLKLSD…KGPLPKYPWE (106 aa). 179–214 is a binding site for FAD; it reads KHKHICLVAGGTGITPMYQLAREIFKNPEDKTKVTL.

This sequence belongs to the flavoprotein pyridine nucleotide cytochrome reductase family. It depends on FAD as a cofactor.

Its subcellular location is the mitochondrion outer membrane. The enzyme catalyses 2 Fe(III)-[cytochrome b5] + NADH = 2 Fe(II)-[cytochrome b5] + NAD(+) + H(+). Its function is as follows. May mediate the reduction of outer membrane cytochrome b5. This chain is NADH-cytochrome b5 reductase 2 (mcr1), found in Emericella nidulans (strain FGSC A4 / ATCC 38163 / CBS 112.46 / NRRL 194 / M139) (Aspergillus nidulans).